The primary structure comprises 142 residues: Large ribosomal subunit protein uL11 (142 aa).

The protein belongs to the universal ribosomal protein uL11 family. As to quaternary structure, part of the ribosomal stalk of the 50S ribosomal subunit. Interacts with L10 and the large rRNA to form the base of the stalk. L10 forms an elongated spine to which L12 dimers bind in a sequential fashion forming a multimeric L10(L12)X complex. Post-translationally, one or more lysine residues are methylated.

Forms part of the ribosomal stalk which helps the ribosome interact with GTP-bound translation factors. The chain is Large ribosomal subunit protein uL11 from Bartonella quintana (strain Toulouse) (Rochalimaea quintana).